The sequence spans 168 residues: MALNLEDKKAVVAEVTAQVAKASTIVVAEYRGITVGDLTKLRAQARQQGVYLRVLKNTLARRAVEGTPFAELAEQLTGPLIYGISEDAVAPAKVLNDFAKGNDKLVLRAGSYDGKVLDVDAVKALATIPSREELLSKLLFVMQAPVSGFARALGALAAKQGEGEAAAA.

Belongs to the universal ribosomal protein uL10 family. In terms of assembly, part of the ribosomal stalk of the 50S ribosomal subunit. The N-terminus interacts with L11 and the large rRNA to form the base of the stalk. The C-terminus forms an elongated spine to which L12 dimers bind in a sequential fashion forming a multimeric L10(L12)X complex.

Functionally, forms part of the ribosomal stalk, playing a central role in the interaction of the ribosome with GTP-bound translation factors. The sequence is that of Large ribosomal subunit protein uL10 from Ralstonia pickettii (strain 12J).